The following is a 65-amino-acid chain: Large ribosomal subunit protein bL33c (65 aa).

This sequence belongs to the bacterial ribosomal protein bL33 family.

It is found in the plastid. The protein resides in the chloroplast. In Zygnema circumcarinatum (Green alga), this protein is Large ribosomal subunit protein bL33c.